The primary structure comprises 306 residues: MQDLYPSRQRADAEMRPRLDPVVHSEWTNDAPISARQAAAFDRDGYIVLEDIFSADEVAFLQKAAGNLLADPAALDADTIVTEPQSNEIRSIFEIHAQSPVMARLAADARLADVARFLLGDEVYIHQSRLNYKPGFKGREFYWHSDFETWHVEDGMPRMRALSMSVLLAENTPHNGPLMVIPGSHRTYLTCVGETPDDHYLSSLKKQEYGVPDEESLAELAHRHGIVAPTGKPGTVILFDCNLMHGSNGNITPFPRANAFLVYNAVSNRLEKPFGVEKPRPWFLARRGEPAALRVERGPLVETVPA.

Gln-127 is an L-ectoine binding site. Lys-133 contacts 2-oxoglutarate. Fe cation is bound by residues His-144, Asp-146, and His-245.

Belongs to the PhyH family. EctD subfamily. Homodimer. Fe(2+) is required as a cofactor.

It carries out the reaction L-ectoine + 2-oxoglutarate + O2 = 5-hydroxyectoine + succinate + CO2. Its function is as follows. Involved in the biosynthesis of 5-hydroxyectoine, called compatible solute, which helps organisms to survive extreme osmotic stress by acting as a highly soluble organic osmolyte. Catalyzes the 2-oxoglutarate-dependent selective hydroxylation of L-ectoine to yield (4S,5S)-5-hydroxyectoine. In Sphingopyxis alaskensis (strain DSM 13593 / LMG 18877 / RB2256) (Sphingomonas alaskensis), this protein is Ectoine dioxygenase.